Consider the following 115-residue polypeptide: Large ribosomal subunit protein uL18 (115 aa).

A disordered region spans residues M1 to V20. Over residues A8 to S18 the composition is skewed to basic residues.

It belongs to the universal ribosomal protein uL18 family. As to quaternary structure, part of the 50S ribosomal subunit; part of the 5S rRNA/L5/L18/L25 subcomplex. Contacts the 5S and 23S rRNAs.

This is one of the proteins that bind and probably mediate the attachment of the 5S RNA into the large ribosomal subunit, where it forms part of the central protuberance. The polypeptide is Large ribosomal subunit protein uL18 (Mesoplasma florum (strain ATCC 33453 / NBRC 100688 / NCTC 11704 / L1) (Acholeplasma florum)).